A 202-amino-acid chain; its full sequence is LexA repressor (202 aa).

Residues 29–49 (VREICTAVGLKSTSTVHSYLE) constitute a DNA-binding region (H-T-H motif). Residues serine 125 and lysine 162 each act as for autocatalytic cleavage activity in the active site.

Belongs to the peptidase S24 family. As to quaternary structure, homodimer.

The enzyme catalyses Hydrolysis of Ala-|-Gly bond in repressor LexA.. In terms of biological role, represses a number of genes involved in the response to DNA damage (SOS response), including recA and lexA. In the presence of single-stranded DNA, RecA interacts with LexA causing an autocatalytic cleavage which disrupts the DNA-binding part of LexA, leading to derepression of the SOS regulon and eventually DNA repair. This is LexA repressor from Clostridium kluyveri (strain NBRC 12016).